The chain runs to 384 residues: MTEGVGLPLWLLAELTYRCPLQCPYCSNPLDYAQHKNELTTQEWFDVFDQARQMGAVQLGFSGGEPLVRQDLEQLVAHAHQQGFYTNLITSGMGLTEQRIADLKQAGLDHIQVSFQASDPVVNDALAGSKHAFEQKYEMCRLVKKYDYPMVLNFVIHRHNIDQIEQIIELCLELNADTVELAICQFYGWAFLNRQGLLPTQEQLTRAERITNEYREKLKAQNHPCKLIFVVPDYYEERPKACMNGWGKIFFTVAPDGMALPCHAARQLPISFPNVREHKLSDIWYKSTGFNHFRGDAWMPEGCRSCPDKDRDFGGCRCQAYMLTGDAANADPVCGKSPYHQMIEQARAESQLVAPLQNLVFRNSRNSKSLSATQNIPVHTITDI.

The Radical SAM core domain occupies 5-220 (VGLPLWLLAE…TNEYREKLKA (216 aa)). [4Fe-4S] cluster is bound by residues Cys19, Cys23, and Cys26.

Belongs to the radical SAM superfamily. PqqE family. In terms of assembly, interacts with PqqD. The interaction is necessary for activity of PqqE. It depends on [4Fe-4S] cluster as a cofactor.

It catalyses the reaction [PQQ precursor protein] + S-adenosyl-L-methionine = E-Y cross-linked-[PQQ precursor protein] + 5'-deoxyadenosine + L-methionine + H(+). Its pathway is cofactor biosynthesis; pyrroloquinoline quinone biosynthesis. Functionally, catalyzes the cross-linking of a glutamate residue and a tyrosine residue in the PqqA protein as part of the biosynthesis of pyrroloquinoline quinone (PQQ). The chain is PqqA peptide cyclase (pqqE) from Acinetobacter calcoaceticus.